A 341-amino-acid chain; its full sequence is Protein-glutamate methylesterase/protein-glutamine glutaminase 2 (341 aa).

Residues 11-126 (RVLVADDSEL…DLGEYGRLIR (116 aa)) form the Response regulatory domain. 4-aspartylphosphate is present on Asp-62. In terms of domain architecture, CheB-type methylesterase spans 152–341 (PARAARVEVV…IPRALRELTR (190 aa)). Active-site residues include Ser-166, His-193, and Asp-285.

It belongs to the CheB family. In terms of processing, phosphorylated by CheA. Phosphorylation of the N-terminal regulatory domain activates the methylesterase activity.

It localises to the cytoplasm. It carries out the reaction [protein]-L-glutamate 5-O-methyl ester + H2O = L-glutamyl-[protein] + methanol + H(+). The catalysed reaction is L-glutaminyl-[protein] + H2O = L-glutamyl-[protein] + NH4(+). Functionally, involved in chemotaxis. Part of a chemotaxis signal transduction system that modulates chemotaxis in response to various stimuli. Catalyzes the demethylation of specific methylglutamate residues introduced into the chemoreceptors (methyl-accepting chemotaxis proteins or MCP) by CheR. Also mediates the irreversible deamidation of specific glutamine residues to glutamic acid. This chain is Protein-glutamate methylesterase/protein-glutamine glutaminase 2, found in Anaeromyxobacter dehalogenans (strain 2CP-C).